Reading from the N-terminus, the 195-residue chain is Probable GTP-binding protein EngB (195 aa).

The EngB-type G domain maps to 22-194; sequence LKGEVAFVGR…LDLISTLLKE (173 aa). GTP-binding positions include 30 to 37, 56 to 60, 74 to 77, 141 to 144, and 173 to 175; these read GRSNVGKS, GKTRS, DLPG, TKMD, and TSS. Serine 37 and threonine 58 together coordinate Mg(2+).

This sequence belongs to the TRAFAC class TrmE-Era-EngA-EngB-Septin-like GTPase superfamily. EngB GTPase family. The cofactor is Mg(2+).

Functionally, necessary for normal cell division and for the maintenance of normal septation. This Thermotoga sp. (strain RQ2) protein is Probable GTP-binding protein EngB.